A 312-amino-acid polypeptide reads, in one-letter code: Olfactory receptor 1F1 (312 aa).

The Extracellular segment spans residues 1 to 25 (MSGTNQSSVSEFLLLGLSRQPQQQH). The N-linked (GlcNAc...) asparagine glycan is linked to asparagine 5. The helical transmembrane segment at 26–49 (LLFVFFLSMYLATVLGNLLIILSV) threads the bilayer. The Cytoplasmic portion of the chain corresponds to 50-57 (SIDSCLHT). A helical transmembrane segment spans residues 58–79 (PMYFFLSNLSFVDICFSFTTVP). Over 80 to 100 (KMLANHILETQTISFCGCLTQ) the chain is Extracellular. A disulfide bridge connects residues cysteine 97 and cysteine 189. Residues 101-120 (MYFVFMFVDMDNFLLAVMAY) form a helical membrane-spanning segment. Residues 121 to 139 (DHFVAVCHPLHYTAKMTHQ) lie on the Cytoplasmic side of the membrane. The helical transmembrane segment at 140-158 (LCALLVAGLWVVANLNVLL) threads the bilayer. The Extracellular portion of the chain corresponds to 159–196 (HTLLMAPLSFCADNAITHFFCDVTPLLKLSCSDTHLNE). Residues 197–219 (VIILSEGALVMITPFLCILASYM) traverse the membrane as a helical segment. Residues 220–236 (HITCTVLKVPSTKGRWK) lie on the Cytoplasmic side of the membrane. A helical membrane pass occupies residues 237–259 (AFSTCGSHLAVVLLFYSTIIAVY). The Extracellular portion of the chain corresponds to 260 to 272 (FNPLSSHSAEKDT). The helical transmembrane segment at 273 to 292 (MATVLYTVVTPMLNPFIYSL) threads the bilayer. At 293 to 312 (RNRYLKGALKKVVGRVVFSV) the chain is on the cytoplasmic side.

It belongs to the G-protein coupled receptor 1 family.

Its subcellular location is the cell membrane. In terms of biological role, odorant receptor. The sequence is that of Olfactory receptor 1F1 (OR1F1) from Homo sapiens (Human).